Here is a 165-residue protein sequence, read N- to C-terminus: V-type proton ATPase 16 kDa proteolipid subunit (165 aa).

Residues 1-10 lie on the Lumenal side of the membrane; sequence MSSTFSGDET. The helical transmembrane segment at 11–33 threads the bilayer; the sequence is APFFGFLGAAAALVFSCMGAAYG. The Cytoplasmic portion of the chain corresponds to 34–55; the sequence is TAKSGVGVASMGVMRPELVMKS. Residues 56–76 traverse the membrane as a helical segment; it reads IVPVVMAGVLGIYGLIIAVII. The Lumenal segment spans residues 77 to 95; it reads STGINPKAKSYYLFDGYAH. Residues 96 to 117 traverse the membrane as a helical segment; it reads LSSGLACGLAGLSAGMAIGIVG. Residues 118–129 are Cytoplasmic-facing; it reads DAGVRANAQQPK. A helical transmembrane segment spans residues 130 to 155; sequence LFVGMILILIFAEALALYGLIVGIIL. The Lumenal segment spans residues 156 to 165; that stretch reads SSRAGQSRAD.

This sequence belongs to the V-ATPase proteolipid subunit family. V-ATPase is a heteromultimeric enzyme composed of a peripheral catalytic V1 complex (main components: subunits A, B, C, D, E, and F) attached to an integral membrane V0 proton pore complex (main component: the proteolipid protein; which is present as a hexamer that forms the proton-conducting pore). In terms of tissue distribution, higher expression in leaves, followed by roots and weakly in flowers. Expression in leaves is light-dependent.

It localises to the vacuole membrane. In terms of biological role, proton-conducting pore forming subunit of the membrane integral V0 complex of vacuolar ATPase. V-ATPase is responsible for acidifying a variety of intracellular compartments in eukaryotic cells. Necessary for the crassulacean acid metabolism. In Kalanchoe daigremontiana (Devil's backbone), this protein is V-type proton ATPase 16 kDa proteolipid subunit.